The following is a 137-amino-acid chain: Small ribosomal subunit protein uS12 (137 aa).

Asp-89 is modified (3-methylthioaspartic acid). The interval 101-137 (SLDTSGVADRKQSRSKYGAKQPKAGAPAAPVKGKGKK) is disordered. The segment covering 116-137 (KYGAKQPKAGAPAAPVKGKGKK) has biased composition (low complexity).

Belongs to the universal ribosomal protein uS12 family. Part of the 30S ribosomal subunit. Contacts proteins S8 and S17. May interact with IF1 in the 30S initiation complex.

With S4 and S5 plays an important role in translational accuracy. In terms of biological role, interacts with and stabilizes bases of the 16S rRNA that are involved in tRNA selection in the A site and with the mRNA backbone. Located at the interface of the 30S and 50S subunits, it traverses the body of the 30S subunit contacting proteins on the other side and probably holding the rRNA structure together. The combined cluster of proteins S8, S12 and S17 appears to hold together the shoulder and platform of the 30S subunit. The sequence is that of Small ribosomal subunit protein uS12 from Chlorobium chlorochromatii (strain CaD3).